An 89-amino-acid polypeptide reads, in one-letter code: Large ribosomal subunit protein bL27 (89 aa).

The disordered stretch occupies residues 1-21; it reads MAHKKAGGSSRNGRDSKGKRL.

The protein belongs to the bacterial ribosomal protein bL27 family.

The protein is Large ribosomal subunit protein bL27 of Bradyrhizobium diazoefficiens (strain JCM 10833 / BCRC 13528 / IAM 13628 / NBRC 14792 / USDA 110).